The sequence spans 183 residues: Streptavidin (183 aa).

The N-terminal stretch at 1-24 (MRKIVVAAIAVSLTTVSITASASA) is a signal peptide. An Avidin-like domain is found at 37–159 (AEAGITGTWY…GHDTFTKVKP (123 aa)). Residues Tyr-67 and Tyr-78 each coordinate biotin. The short motif at 83–85 (RYD) is the Cell attachment site; atypical element. The biotin site is built by Trp-116, Trp-132, and Trp-144.

The protein belongs to the avidin/streptavidin family. Homotetramer.

The protein resides in the secreted. The biological function of streptavidin is not known. Forms a strong non-covalent specific complex with biotin (one molecule of biotin per subunit of streptavidin). The chain is Streptavidin from Streptomyces avidinii.